The sequence spans 234 residues: MRDEIFKEPIKKQFEFDDFVVSVFDDMIGRSVPFYDVSGKLVSEILAKILPAKAHVIDLGCSTATSLLLLNQLRDDLVLEGVDSSSAMIENARKKAKAYGAKIKFSVGDVLESQICQMDAVMMNYTLQFIRPPKRAQLVKSIYDGLNEGGVFVFSEKIIYEDKKFAKNMIEIYENYKEKQGYSRYEIAQKREALENVLIPYTEEENRTLALGAGFKRVESVFKWGNFMTFLAFK.

S-adenosyl-L-methionine-binding positions include Tyr35, 60 to 62, 109 to 110, Asn124, and Arg191; these read GCS and DV.

Belongs to the class I-like SAM-binding methyltransferase superfamily. Cx-SAM synthase family. Homodimer.

The catalysed reaction is prephenate + S-adenosyl-L-methionine = carboxy-S-adenosyl-L-methionine + 3-phenylpyruvate + H2O. In terms of biological role, catalyzes the conversion of S-adenosyl-L-methionine (SAM) to carboxy-S-adenosyl-L-methionine (Cx-SAM). The protein is Carboxy-S-adenosyl-L-methionine synthase of Campylobacter curvus (strain 525.92).